A 461-amino-acid chain; its full sequence is Kremen protein 2 (461 aa).

The signal sequence occupies residues 1–24 (MGTPHLQGFLLLFPLLLRLHGASA). The Extracellular segment spans residues 25 to 363 (GSLHSPGLSE…SPKPGAAQAS (339 aa)). Residues 34–118 (ECFQVNGADY…YWRYCDIPTC (85 aa)) form the Kringle domain. Disulfide bonds link Cys35-Cys118, Cys59-Cys99, and Cys88-Cys113. Asn48 carries N-linked (GlcNAc...) asparagine glycosylation. Residues 120–214 (MPGYLGCFVD…DGRLGIYEVS (95 aa)) form the WSC domain. Residues Cys218 and Cys244 are joined by a disulfide bond. The region spanning 218–325 (CQGNWSAPQG…QGFALTYRGL (108 aa)) is the CUB domain. 3 N-linked (GlcNAc...) asparagine glycosylation sites follow: Asn221, Asn243, and Asn350. The tract at residues 329-357 (VEGRASPEDSTESLAGDPDGANASCSPKP) is disordered. The chain crosses the membrane as a helical span at residues 364 to 386 (IGARVFSTVTAFSVLLLLLLSLL). The Cytoplasmic segment spans residues 387–461 (RLLRRRSCLL…SSLRSLVSAL (75 aa)). The segment at 429–452 (CPPGDSQAEGPAAGYRPLSASSQS) is disordered.

Interacts with ERLEC1. Forms a ternary complex with DKK1 and LRP6.

It is found in the membrane. Receptor for Dickkopf proteins. Cooperates with DKK1/2 to inhibit Wnt/beta-catenin signaling by promoting the endocytosis of Wnt receptors LRP5 and LRP6. Plays a role in limb development; attenuates Wnt signaling in the developing limb to allow normal limb patterning and can also negatively regulate bone formation. In Mus musculus (Mouse), this protein is Kremen protein 2 (Kremen2).